A 478-amino-acid chain; its full sequence is Shikimate biosynthesis protein AroDE (478 aa).

Residues 1 to 208 (MLCTIIRGPS…LNHHYFYNFT (208 aa)) are 3-dehydroquinate dehydratase. 3-dehydroquinate is bound by residues serine 21, 29–31 (EMR), and 55–57 (TWK). The active-site Proton donor/acceptor; for 3-dehydroquinate dehydratase activity is histidine 110. Residue lysine 133 is the Schiff-base intermediate with substrate; for 3-dehydroquinate dehydratase activity of the active site. 3-dehydroquinate is bound by residues arginine 171 and glutamine 196. The tract at residues 209-478 (NLSPQSQICA…VLASLFSIAA (270 aa)) is shikimate 5-dehydrogenase. Position 226–228 (226–228 (SIG)) interacts with shikimate. Catalysis depends on lysine 277, which acts as the Proton acceptor; for shikimate dehydrogenase activity. Shikimate is bound by residues asparagine 298 and aspartate 313. NADP(+) contacts are provided by residues 337 to 341 (GAGGA), 360 to 362 (NRT), and glycine 435. A shikimate-binding site is contributed by glutamine 442.

The protein in the N-terminal section; belongs to the type-I 3-dehydroquinase family. In the C-terminal section; belongs to the shikimate dehydrogenase family.

The catalysed reaction is 3-dehydroquinate = 3-dehydroshikimate + H2O. It catalyses the reaction shikimate + NADP(+) = 3-dehydroshikimate + NADPH + H(+). Its pathway is metabolic intermediate biosynthesis; chorismate biosynthesis; chorismate from D-erythrose 4-phosphate and phosphoenolpyruvate: step 3/7. The protein operates within metabolic intermediate biosynthesis; chorismate biosynthesis; chorismate from D-erythrose 4-phosphate and phosphoenolpyruvate: step 4/7. Functionally, bifunctional enzyme that catalyzes two sequential steps of the aromatic amino acids biosynthetic pathway. In the first reaction, the AroD domain catalyzes the cis-dehydration of 3-dehydroquinate (DHQ) and introduces the first double bond of the aromatic ring to yield 3-dehydroshikimate; in the second reaction, the AroE domain catalyzes the reversible NADPH linked reduction of 3-dehydroshikimate (DHSA) to yield shikimate (SA). The polypeptide is Shikimate biosynthesis protein AroDE (Chlamydia muridarum (strain MoPn / Nigg)).